The sequence spans 185 residues: Adenine phosphoribosyltransferase (185 aa).

It belongs to the purine/pyrimidine phosphoribosyltransferase family. Homodimer.

Its subcellular location is the cytoplasm. The catalysed reaction is AMP + diphosphate = 5-phospho-alpha-D-ribose 1-diphosphate + adenine. It functions in the pathway purine metabolism; AMP biosynthesis via salvage pathway; AMP from adenine: step 1/1. Functionally, catalyzes a salvage reaction resulting in the formation of AMP, that is energically less costly than de novo synthesis. In Corynebacterium glutamicum (strain ATCC 13032 / DSM 20300 / JCM 1318 / BCRC 11384 / CCUG 27702 / LMG 3730 / NBRC 12168 / NCIMB 10025 / NRRL B-2784 / 534), this protein is Adenine phosphoribosyltransferase.